Consider the following 462-residue polypeptide: uncharacterized protein (462 aa).

This is an uncharacterized protein from Acanthamoeba polyphaga (Amoeba).